A 232-amino-acid chain; its full sequence is tRNA (guanine-N(7)-)-methyltransferase (232 aa).

Glu63, Glu88, Asp115, and Asp137 together coordinate S-adenosyl-L-methionine. Residue Asp137 is part of the active site. Substrate contacts are provided by residues Lys141, Asp173, and 211 to 214 (TRYE).

The protein belongs to the class I-like SAM-binding methyltransferase superfamily. TrmB family.

It carries out the reaction guanosine(46) in tRNA + S-adenosyl-L-methionine = N(7)-methylguanosine(46) in tRNA + S-adenosyl-L-homocysteine. It participates in tRNA modification; N(7)-methylguanine-tRNA biosynthesis. In terms of biological role, catalyzes the formation of N(7)-methylguanine at position 46 (m7G46) in tRNA. This Chelativorans sp. (strain BNC1) protein is tRNA (guanine-N(7)-)-methyltransferase.